We begin with the raw amino-acid sequence, 114 residues long: UPF0342 protein lp_1415 (114 aa).

The protein belongs to the UPF0342 family.

The chain is UPF0342 protein lp_1415 from Lactiplantibacillus plantarum (strain ATCC BAA-793 / NCIMB 8826 / WCFS1) (Lactobacillus plantarum).